A 367-amino-acid chain; its full sequence is Histidinol-phosphate aminotransferase 1 (367 aa).

Lysine 226 bears the N6-(pyridoxal phosphate)lysine mark.

The protein belongs to the class-II pyridoxal-phosphate-dependent aminotransferase family. Histidinol-phosphate aminotransferase subfamily. As to quaternary structure, homodimer. Requires pyridoxal 5'-phosphate as cofactor.

It catalyses the reaction L-histidinol phosphate + 2-oxoglutarate = 3-(imidazol-4-yl)-2-oxopropyl phosphate + L-glutamate. It participates in amino-acid biosynthesis; L-histidine biosynthesis; L-histidine from 5-phospho-alpha-D-ribose 1-diphosphate: step 7/9. The protein is Histidinol-phosphate aminotransferase 1 (hisC1) of Haemophilus influenzae (strain ATCC 51907 / DSM 11121 / KW20 / Rd).